The primary structure comprises 92 residues: Small ribosomal subunit protein uS19 (92 aa).

It belongs to the universal ribosomal protein uS19 family.

In terms of biological role, protein S19 forms a complex with S13 that binds strongly to the 16S ribosomal RNA. The chain is Small ribosomal subunit protein uS19 from Polaromonas sp. (strain JS666 / ATCC BAA-500).